The sequence spans 78 residues: Acyl carrier protein (78 aa).

Positions 2–77 (STIEERVKKI…EAIDYINAHA (76 aa)) constitute a Carrier domain. Position 37 is an O-(pantetheine 4'-phosphoryl)serine (Ser37).

Belongs to the acyl carrier protein (ACP) family. In terms of processing, 4'-phosphopantetheine is transferred from CoA to a specific serine of apo-ACP by AcpS. This modification is essential for activity because fatty acids are bound in thioester linkage to the sulfhydryl of the prosthetic group.

The protein resides in the cytoplasm. It participates in lipid metabolism; fatty acid biosynthesis. Functionally, carrier of the growing fatty acid chain in fatty acid biosynthesis. The sequence is that of Acyl carrier protein from Stutzerimonas stutzeri (strain A1501) (Pseudomonas stutzeri).